The sequence spans 264 residues: AA9 family lytic polysaccharide monooxygenase A (264 aa).

Residues 1 to 18 form the signal peptide; it reads MHFAALAILSSLVASAAA. Histidine 19 lines the Cu(2+) pocket. N-linked (GlcNAc...) asparagine glycans are attached at residues asparagine 51 and asparagine 75. A disulfide bridge connects residues cysteine 59 and cysteine 182. Histidine 96 serves as a coordination point for Cu(2+). Asparagine 110 carries an N-linked (GlcNAc...) asparagine glycan. Histidine 162 provides a ligand contact to O2. Tyrosine 179 lines the Cu(2+) pocket. Residues asparagine 218 and asparagine 251 are each glycosylated (N-linked (GlcNAc...) asparagine).

This sequence belongs to the polysaccharide monooxygenase AA9 family. It depends on Cu(2+) as a cofactor.

The protein localises to the secreted. It carries out the reaction [(1-&gt;4)-beta-D-glucosyl]n+m + reduced acceptor + O2 = 4-dehydro-beta-D-glucosyl-[(1-&gt;4)-beta-D-glucosyl]n-1 + [(1-&gt;4)-beta-D-glucosyl]m + acceptor + H2O.. Functionally, lytic polysaccharide monooxygenase (LPMO) that depolymerizes crystalline and amorphous polysaccharides via the oxidation of scissile alpha- or beta-(1-4)-glycosidic bonds, yielding C4 oxidation products. Catalysis by LPMOs requires the reduction of the active-site copper from Cu(II) to Cu(I) by a reducing agent and H(2)O(2) or O(2) as a cosubstrate. Active on cellulose and cello-oligosaccharides, as well as plant cell wall-derived hemicellulosic polysaccharides. Also active on cello-oligosaccharides such as cellohexaose, cellopentaose or cellotetraose. The protein is AA9 family lytic polysaccharide monooxygenase A of Phanerochaete carnosa (strain HHB-10118-sp) (White-rot fungus).